The chain runs to 222 residues: Uridine diphosphate glucose pyrophosphatase NUDT14 (222 aa).

The region spanning 38–206 (KTHDSVTVLL…DIPKTLGVIF (169 aa)) is the Nudix hydrolase domain. The Nudix box motif lies at 111-129 (PGLSLEEVACKEAWEECGY).

Belongs to the Nudix hydrolase family. In terms of assembly, homodimer. Mg(2+) serves as cofactor.

It localises to the cytoplasm. It carries out the reaction UDP-sugar + H2O = UMP + alpha-D-aldose 1-phosphate.. Functionally, hydrolyzes UDP-glucose to glucose 1-phosphate and UMP and ADP-ribose to ribose 5-phosphate and AMP. The physiological substrate is probably UDP-glucose. Poor activity on other substrates such as ADP-glucose, CDP-glucose, GDP-glucose and GDP-mannose. The sequence is that of Uridine diphosphate glucose pyrophosphatase NUDT14 (NUDT14) from Homo sapiens (Human).